A 116-amino-acid chain; its full sequence is Putative serine proteinase inhibitor 2 homolog first part (116 aa).

Belongs to the serpin family. Poxviruses subfamily.

This Vaccinia virus (strain Copenhagen) (VACV) protein is Putative serine proteinase inhibitor 2 homolog first part.